The sequence spans 373 residues: Methylmalonyl-CoA decarboxylase subunit beta (373 aa).

Transmembrane regions (helical) follow at residues 17–37 (FLAFTTGNAIMILVGLILLYL), 38–58 (AFAREFEPLLLGPIAFGCLLA), 81–101 (IFPPLIFLGVGAMTDFGPLIA), 106–126 (LLLGAAAQIGVFAALGGAMML), 132–152 (EAAAIGIIGGADGPTSIYLAT), 156–176 (PHLLGAIAVAAYSYMSLVPLI), 206–226 (IVFPIVATIFISLLLPSITSL), 257–277 (VTIFLATGTGLTMSAEHFLSL), 280–300 (IKIILLGLFAFICGTAGGVLF), and 343–363 (FLLMHAMGPNVAGVIGTAVAA).

The protein belongs to the GcdB/MmdB/OadB family. In terms of assembly, the methylmalonyl-CoA decarboxylase is composed of five subunits: the carboxyltransferase alpha subunit (MmdA), the tunnel beta subunit (MmdB), the biotin-containing gamma subunit (MmdC), and the delta (MmdD) and epsilon (MmdE) subunits. Post-translationally, the N-terminus is blocked.

Its subcellular location is the cell membrane. It carries out the reaction (S)-methylmalonyl-CoA + Na(+)(in) + H(+)(out) = propanoyl-CoA + Na(+)(out) + CO2. Completely inhibited by avidin. In terms of biological role, tunnel subunit of the sodium ion pump methylmalonyl-CoA decarboxylase, which converts the chemical energy of a decarboxylation reaction into an electrochemical gradient of Na(+) ions across the cytoplasmic membrane, thereby creating a sodium ion motive force that is used for ATP synthesis. The beta subunit catalyzes the decarboxylation of the carboxybiotin carrier protein and the coupled export of Na(+) ions. Can also convert malonyl-CoA into acetyl-CoA. The chain is Methylmalonyl-CoA decarboxylase subunit beta from Veillonella parvula (Staphylococcus parvulus).